Consider the following 118-residue polypeptide: Hydrogenase maturation factor HypA (118 aa).

His-2 is a binding site for Ni(2+). Zn(2+) contacts are provided by Cys-73, Cys-76, Cys-89, and Cys-92.

It belongs to the HypA/HybF family.

Involved in the maturation of [NiFe] hydrogenases. Required for nickel insertion into the metal center of the hydrogenase. The protein is Hydrogenase maturation factor HypA of Shewanella oneidensis (strain ATCC 700550 / JCM 31522 / CIP 106686 / LMG 19005 / NCIMB 14063 / MR-1).